Here is a 223-residue protein sequence, read N- to C-terminus: Glycolipid transfer protein 2 (223 aa).

Positions 69, 73, 116, and 155 each coordinate a ganglioside GM3 (d18:1(4E)).

It belongs to the GLTP family.

Transfers glycolipids in vitro. This Arabidopsis thaliana (Mouse-ear cress) protein is Glycolipid transfer protein 2.